The primary structure comprises 650 residues: Probable basic-leucine zipper transcription factor K (650 aa).

The stretch at 37–180 forms a coiled coil; that stretch reads IDNNNNNYSN…KQQKQQQQEQ (144 aa). 2 disordered regions span residues 109-130 and 242-279; these read IPQQQQQEQDQQEDQDQEQEQE and TTLNTNLQSDNNNNNNNNNNNNNNNNNNNNNNNNNNNL. The span at 118 to 129 shows a compositional bias: acidic residues; sequence DQQEDQDQEQEQ. The segment covering 242–251 has biased composition (polar residues); sequence TTLNTNLQSD. Residues 252 to 278 are compositionally biased toward low complexity; sequence NNNNNNNNNNNNNNNNNNNNNNNNNNN. A coiled-coil region spans residues 259–286; it reads NNNNNNNNNNNNNNNNNNNNLLNEKQIE. In terms of domain architecture, bZIP spans 305 to 368; the sequence is FNKIEKGKRN…IEIMRSEPES (64 aa). Residues 307–327 form a basic motif region; it reads KIEKGKRNQTESSKNFRERKK. The tract at residues 330-337 is leucine-zipper; the sequence is IKDIELKL. The span at 452-466 shows a compositional bias: low complexity; it reads NNNNNNNNNNNNNNN. Residues 452-473 form a disordered region; that stretch reads NNNNNNNNNNNNNNNDNDDDNE.

It belongs to the bZIP family.

It localises to the nucleus. Its function is as follows. Probable transcriptional regulator. This chain is Probable basic-leucine zipper transcription factor K (bzpK), found in Dictyostelium discoideum (Social amoeba).